We begin with the raw amino-acid sequence, 419 residues long: Tyrosine--tRNA ligase (419 aa).

Residue Tyr-42 participates in L-tyrosine binding. Residues 47–56 (CTAPSLHVGS) carry the 'HIGH' region motif. L-tyrosine-binding residues include Tyr-179 and Gln-183. Residues 239-243 (KMGKT) carry the 'KMSKS' region motif. Position 242 (Lys-242) interacts with ATP. The S4 RNA-binding domain maps to 353–419 (LGVLAAFVKA…RKRHVLLKLV (67 aa)).

This sequence belongs to the class-I aminoacyl-tRNA synthetase family. TyrS type 1 subfamily. Homodimer.

The protein localises to the cytoplasm. It carries out the reaction tRNA(Tyr) + L-tyrosine + ATP = L-tyrosyl-tRNA(Tyr) + AMP + diphosphate + H(+). In terms of biological role, catalyzes the attachment of tyrosine to tRNA(Tyr) in a two-step reaction: tyrosine is first activated by ATP to form Tyr-AMP and then transferred to the acceptor end of tRNA(Tyr). The protein is Tyrosine--tRNA ligase of Methylocella silvestris (strain DSM 15510 / CIP 108128 / LMG 27833 / NCIMB 13906 / BL2).